A 253-amino-acid polypeptide reads, in one-letter code: Phycobilisome rod-core linker polypeptide CpcG4 (253 aa).

In terms of domain architecture, PBS-linker spans 11-191 (SSQNHRVTSF…DFQEKAGTVQ (181 aa)).

It belongs to the phycobilisome linker protein family. Part of the phycobilisome, a hemidiscoidal structure that is composed of two distinct substructures: a core complex and a number of rods radiating from the core.

It is found in the cellular thylakoid membrane. Functionally, rod-core linker protein required for attachment of phycocyanin to allophycocyanin in cores of phycobilisomes. In terms of biological role, linker polypeptides determine the state of aggregation and the location of the disk-shaped phycobiliprotein units within the phycobilisome and modulate their spectroscopic properties in order to mediate a directed and optimal energy transfer. The chain is Phycobilisome rod-core linker polypeptide CpcG4 from Nostoc sp. (strain PCC 7120 / SAG 25.82 / UTEX 2576).